The chain runs to 320 residues: Solute carrier family 35 member B1 (320 aa).

A run of 8 helical transmembrane segments spans residues 9–29, 49–69, 81–103, 134–154, 166–186, 202–222, 241–261, and 283–303; these read GLRLLVCFLGVFVCYFYYGIL, FALSLVFVQCIVNALFAKLLI, QSWLYSACSLSYLGAMVSSNSAL, YPLTKYLCVLLIVFGVALFMY, TVGYGELLLLLSLTLDGLTGV, MMLSINLWSSLFLGAGIVLTG, IVLFSLTSALGQTFIFMTVVY, and VILFSNPISSIQWVGTLLVFL. The short motif at 316 to 320 is the Di-lysine motif element; that stretch reads KKPSH.

It belongs to the nucleotide-sugar transporter family. SLC35B subfamily.

The protein localises to the endoplasmic reticulum membrane. Functionally, probable sugar transporter. This Xenopus laevis (African clawed frog) protein is Solute carrier family 35 member B1 (slc35b1).